A 923-amino-acid polypeptide reads, in one-letter code: Alanine--tRNA ligase (923 aa).

Zn(2+) contacts are provided by His-614, His-618, Cys-717, and His-721. The segment at 884–903 is disordered; the sequence is KVGGGGGGPPDFAQGGGPDA. Over residues 885–901 the composition is skewed to gly residues; it reads VGGGGGGPPDFAQGGGP.

This sequence belongs to the class-II aminoacyl-tRNA synthetase family. Zn(2+) serves as cofactor.

It is found in the cytoplasm. The catalysed reaction is tRNA(Ala) + L-alanine + ATP = L-alanyl-tRNA(Ala) + AMP + diphosphate. In terms of biological role, catalyzes the attachment of alanine to tRNA(Ala) in a two-step reaction: alanine is first activated by ATP to form Ala-AMP and then transferred to the acceptor end of tRNA(Ala). Also edits incorrectly charged Ser-tRNA(Ala) and Gly-tRNA(Ala) via its editing domain. In Haloquadratum walsbyi (strain DSM 16790 / HBSQ001), this protein is Alanine--tRNA ligase.